The primary structure comprises 469 residues: 3-isopropylmalate dehydratase large subunit (469 aa).

[4Fe-4S] cluster contacts are provided by cysteine 350, cysteine 410, and cysteine 413.

Belongs to the aconitase/IPM isomerase family. LeuC type 1 subfamily. As to quaternary structure, heterodimer of LeuC and LeuD. The cofactor is [4Fe-4S] cluster.

The enzyme catalyses (2R,3S)-3-isopropylmalate = (2S)-2-isopropylmalate. It participates in amino-acid biosynthesis; L-leucine biosynthesis; L-leucine from 3-methyl-2-oxobutanoate: step 2/4. Catalyzes the isomerization between 2-isopropylmalate and 3-isopropylmalate, via the formation of 2-isopropylmaleate. This chain is 3-isopropylmalate dehydratase large subunit, found in Rhizobium meliloti (strain 1021) (Ensifer meliloti).